The primary structure comprises 60 residues: Hemocyte defensin Cg-Defh1 (60 aa).

A signal peptide spans 1 to 17; it reads LFTLVVLLMVSADMAFA. Residues Phe19, Gly20, and Cys21 each coordinate beta-D-GlcNAc-(1-&gt;4)-Mur2Ac(oyl-L-Ala-gamma-D-Glu-L-Lys-D-Ala-D-Ala)-di-trans,octa-cis-undecaprenyl diphosphate. Cystine bridges form between Cys21-Cys42, Cys28-Cys51, Cys32-Cys53, and Cys37-Cys56. Residues 22 to 25 are binds to membrane interface; sequence PRDQ. His31 serves as a coordination point for beta-D-GlcNAc-(1-&gt;4)-Mur2Ac(oyl-L-Ala-gamma-D-Glu-L-Lys-D-Ala-D-Ala)-di-trans,octa-cis-undecaprenyl diphosphate. The binds to membrane interface stretch occupies residues 43–49; that stretch reads DAVTLWL. Cys51 is a beta-D-GlcNAc-(1-&gt;4)-Mur2Ac(oyl-L-Ala-gamma-D-Glu-L-Lys-D-Ala-D-Ala)-di-trans,octa-cis-undecaprenyl diphosphate binding site.

This sequence belongs to the invertebrate defensin family. In terms of tissue distribution, expressed in hemocytes.

Its subcellular location is the secreted. The protein localises to the target cell membrane. Its function is as follows. Antibacterial peptide mostly active against Gram-positive bacteria. It acts by selectively inhibiting peptidoglycan biosynthesis through complex formation with the cell wall precursor lipid II (1:1 molar ratio) thus inhibiting cell wall synthesis. It does not disrupt cell membranes. Is noticeably less potent than Cg-Defh2 and Cg-Defm. Shows no or limited activities against Gram-negative bacteria. This chain is Hemocyte defensin Cg-Defh1, found in Magallana gigas (Pacific oyster).